The following is a 209-amino-acid chain: Protein Sxy (209 aa).

The protein belongs to the Sxy/TfoX family.

Its function is as follows. Induces low levels of natural DNA uptake by inducing transcription of the competence genes (the CRP-S regulon) required for DNA transformation. Induction of the CRP-S regulon also requires Sxy-activated promoter (CRP-S), cAMP receptor protein (CRP) and cAMP. Induces CRP-S site-containing genes which are involved in genome maintenance and transcription or encoding transposases and toxin-antitoxin pairs. This Escherichia coli (strain K12) protein is Protein Sxy.